Consider the following 50-residue polypeptide: Large ribosomal subunit protein eL39 (50 aa).

This sequence belongs to the eukaryotic ribosomal protein eL39 family.

The chain is Large ribosomal subunit protein eL39 from Methanoculleus marisnigri (strain ATCC 35101 / DSM 1498 / JR1).